We begin with the raw amino-acid sequence, 195 residues long: 3-isopropylmalate dehydratase small subunit (195 aa).

The protein belongs to the LeuD family. LeuD type 1 subfamily. Heterodimer of LeuC and LeuD.

It carries out the reaction (2R,3S)-3-isopropylmalate = (2S)-2-isopropylmalate. It functions in the pathway amino-acid biosynthesis; L-leucine biosynthesis; L-leucine from 3-methyl-2-oxobutanoate: step 2/4. Its function is as follows. Catalyzes the isomerization between 2-isopropylmalate and 3-isopropylmalate, via the formation of 2-isopropylmaleate. The protein is 3-isopropylmalate dehydratase small subunit of Salinispora arenicola (strain CNS-205).